A 447-amino-acid polypeptide reads, in one-letter code: MDMGNQHPSISRLQEIQREVKAIEPQVVGFSGLSDDKNYKRLERILTKQLFEIDSVDTEGKGDIQQARKRAAQETERLLKELEQNANHPHRIEIQNIFKEAQALVKDKIVPFYSGGNCVTDEFEEGIQDIILRLTHVKTGGKVSLRKARYRTLTKICAVQEVIEDCMKKQPSLPLSEDVHPSVAKINSVMCEVNKARGTLIALLMGVDSSETCRHLSCVLSGLIADLDALDVCGRTEIRNYRREVVEDINKLLKYLDLEEEADSTHAFDLGQNHSIIKIENVLKRMREIKNELLQAQSPPELYLRAKTELQGLIGQLDEVSLEKNPCIREARRRAVIEVQILITYLDLKEALEKRKLFPCEEHPPHKAVWEILGNLSEILGEVLSFGGNRTDKNYIRLEELLTKQLLALDAVDPQGEEKCKAARKQAVKLAQNILSYLDMKSDEWEY.

BAG domains follow at residues 9–86 (SISR…EQNA), 95–167 (QNIF…EDCM), 182–260 (SVAK…DLEE), 275–350 (SIIK…DLKE), and 365–442 (PHKA…DMKS).

In terms of assembly, binds to the ATPase domain of HSP/HSP70 chaperones. Binds PRKN. Interacts with HSPA8. Interacts with JPH2.

Its function is as follows. Co-chaperone for HSP/HSP70 proteins. It functions as a nucleotide-exchange factor promoting the release of ADP from HSP70, thereby activating HSP70-mediated protein refolding. Has an essential role in maintaining proteostasis at junctional membrane complexes (JMC), where it may function as a scaffold between the HSPA8 chaperone and JMC proteins enabling correct, HSPA8-dependent JMC protein folding. Inhibits both auto-ubiquitination of PRKN and ubiquitination of target proteins by PRKN. This is BAG family molecular chaperone regulator 5 (Bag5) from Mus musculus (Mouse).